The sequence spans 89 residues: Dynein light chain (89 aa).

The protein belongs to the dynein light chain family. Tegument.

It localises to the cytoplasm. The protein localises to the cytoskeleton. Functionally, acts as a non-catalytic accessory component of a dynein complex. The protein is Dynein light chain (DLC) of Schistosoma mansoni (Blood fluke).